The chain runs to 247 residues: Diglucosylglycerate octanoyltransferase (247 aa).

It belongs to the OctT acyltransferase family. In terms of assembly, homotetramer.

The catalysed reaction is (2R)-2-O-[alpha-D-glucopyranosyl-(1-&gt;6)-alpha-D-glucopyranosyl]-glycerate + octanoyl-CoA = (2R)-2-O-[6-O-octanoyl-alpha-D-glucopyranosyl-(1-&gt;6)-alpha-D-glucopyranosyl]-glycerate + CoA. Its function is as follows. Sugar octanoyltransferase likely involved in the biosynthesis of mycobacterial methylglucose lipopolysaccharide (MGLP). Catalyzes the transfer of an octanoyl group from octanoyl-CoA to the C6 OH of the second glucose in diglucosylglycerate (DGG). DGG is the preferred acceptor, but to a lesser extent, GG (glucosylglycerate) can also be used as substrate. DGG and GG are the two earliest intermediates in MGLP biosynthesis. The protein is Diglucosylglycerate octanoyltransferase of Mycobacterium tuberculosis (strain ATCC 25618 / H37Rv).